Here is a 425-residue protein sequence, read N- to C-terminus: Sodium-dependent glucose transporter 1A (425 aa).

11 helical membrane-spanning segments follow: residues 35 to 55, 61 to 81, 84 to 104, 123 to 143, 183 to 203, 228 to 248, 271 to 291, 294 to 314, 320 to 340, 355 to 375, and 382 to 402; these read LIFV…GVLF, FFLL…IPFC, AVLL…VDTG, ALHF…KLAW, WAYA…FGLF, ALLC…ITYG, SIFW…ATFL, GTMI…LVLF, CLWI…PSGI, AFFV…IGIL, and LPVV…LFPV.

It belongs to the major facilitator superfamily.

The protein localises to the apical cell membrane. Functionally, may function as a sodium-dependent glucose transporter. Potential channels for urea in the inner medulla of kidney. This Mus musculus (Mouse) protein is Sodium-dependent glucose transporter 1A.